A 166-amino-acid chain; its full sequence is Small ribosomal subunit protein uS5 (166 aa).

In terms of domain architecture, S5 DRBM spans Leu-11–Val-74.

The protein belongs to the universal ribosomal protein uS5 family. As to quaternary structure, part of the 30S ribosomal subunit. Contacts proteins S4 and S8.

Its function is as follows. With S4 and S12 plays an important role in translational accuracy. Located at the back of the 30S subunit body where it stabilizes the conformation of the head with respect to the body. This chain is Small ribosomal subunit protein uS5, found in Lactiplantibacillus plantarum (strain ATCC BAA-793 / NCIMB 8826 / WCFS1) (Lactobacillus plantarum).